The chain runs to 753 residues: 5-methyltetrahydropteroyltriglutamate--homocysteine methyltransferase (753 aa).

Residues arginine 17–lysine 20 and lysine 117 contribute to the 5-methyltetrahydropteroyltri-L-glutamate site. L-homocysteine-binding positions include isoleucine 431–serine 433 and glutamate 484. Residues isoleucine 431–serine 433 and glutamate 484 each bind L-methionine. Residues arginine 515–cysteine 516 and tryptophan 561 contribute to the 5-methyltetrahydropteroyltri-L-glutamate site. Aspartate 599 is an L-homocysteine binding site. Position 599 (aspartate 599) interacts with L-methionine. Residue glutamate 605 coordinates 5-methyltetrahydropteroyltri-L-glutamate. Zn(2+) contacts are provided by histidine 641, cysteine 643, and glutamate 665. The active-site Proton donor is the histidine 694. Residue cysteine 726 participates in Zn(2+) binding.

Belongs to the vitamin-B12 independent methionine synthase family. Requires Zn(2+) as cofactor.

The catalysed reaction is 5-methyltetrahydropteroyltri-L-glutamate + L-homocysteine = tetrahydropteroyltri-L-glutamate + L-methionine. It participates in amino-acid biosynthesis; L-methionine biosynthesis via de novo pathway; L-methionine from L-homocysteine (MetE route): step 1/1. Its function is as follows. Catalyzes the transfer of a methyl group from 5-methyltetrahydrofolate to homocysteine resulting in methionine formation. This chain is 5-methyltetrahydropteroyltriglutamate--homocysteine methyltransferase, found in Escherichia coli (strain ATCC 8739 / DSM 1576 / NBRC 3972 / NCIMB 8545 / WDCM 00012 / Crooks).